Reading from the N-terminus, the 405-residue chain is 8-amino-7-oxononanoate synthase 2 (405 aa).

Position 20 (Arg20) interacts with substrate. 116-117 (GY) is a pyridoxal 5'-phosphate binding site. His141 is a substrate binding site. Pyridoxal 5'-phosphate contacts are provided by Ser187, His215, and Thr243. Residue Lys246 is modified to N6-(pyridoxal phosphate)lysine. Position 369 (Thr369) interacts with substrate.

It belongs to the class-II pyridoxal-phosphate-dependent aminotransferase family. BioF subfamily. In terms of assembly, homodimer. The cofactor is pyridoxal 5'-phosphate.

The catalysed reaction is 6-carboxyhexanoyl-[ACP] + L-alanine + H(+) = (8S)-8-amino-7-oxononanoate + holo-[ACP] + CO2. It participates in cofactor biosynthesis; biotin biosynthesis. Functionally, catalyzes the decarboxylative condensation of pimeloyl-[acyl-carrier protein] and L-alanine to produce 8-amino-7-oxononanoate (AON), [acyl-carrier protein], and carbon dioxide. The protein is 8-amino-7-oxononanoate synthase 2 of Polaromonas sp. (strain JS666 / ATCC BAA-500).